Reading from the N-terminus, the 271-residue chain is Neurexophilin-1 (271 aa).

The first 21 residues, 1 to 21, serve as a signal peptide directing secretion; that stretch reads MQAACWYVLLLLQPTIYLVTC. The II stretch occupies residues 22–97; the sequence is ANLTNGGKSE…WDWLRNSTDL (76 aa). N-linked (GlcNAc...) asparagine glycans are attached at residues asparagine 23, asparagine 68, asparagine 93, asparagine 146, asparagine 156, and asparagine 162. Positions 98–176 are III; sequence QEPRPRAKRR…LVPPTKIVEF (79 aa). The segment at 177–185 is IV (linker domain); that stretch reads DLAQQTVID. Residues 186–271 form a v (Cys-rich) region; the sequence is AKDSKSFNCR…HSDTPYFPSG (86 aa).

It belongs to the neurexophilin family.

The protein resides in the secreted. May be signaling molecules that resemble neuropeptides and that act by binding to alpha-neurexins and possibly other receptors. The chain is Neurexophilin-1 (NXPH1) from Pongo abelii (Sumatran orangutan).